Here is a 119-residue protein sequence, read N- to C-terminus: Large ribosomal subunit protein uL18 (119 aa).

It belongs to the universal ribosomal protein uL18 family. In terms of assembly, part of the 50S ribosomal subunit; part of the 5S rRNA/L5/L18/L25 subcomplex. Contacts the 5S and 23S rRNAs.

This is one of the proteins that bind and probably mediate the attachment of the 5S RNA into the large ribosomal subunit, where it forms part of the central protuberance. The chain is Large ribosomal subunit protein uL18 from Clostridium botulinum (strain Okra / Type B1).